The chain runs to 245 residues: Geranylgeranylglyceryl phosphate synthase (245 aa).

D24 and S54 together coordinate Mg(2+). Residues 172-178 (YLEAGSG), 203-204 (GG), and 225-226 (GT) each bind sn-glycerol 1-phosphate.

The protein belongs to the GGGP/HepGP synthase family. Group II subfamily. Mg(2+) serves as cofactor.

It localises to the cytoplasm. It carries out the reaction sn-glycerol 1-phosphate + (2E,6E,10E)-geranylgeranyl diphosphate = sn-3-O-(geranylgeranyl)glycerol 1-phosphate + diphosphate. It functions in the pathway membrane lipid metabolism; glycerophospholipid metabolism. In terms of biological role, prenyltransferase that catalyzes the transfer of the geranylgeranyl moiety of geranylgeranyl diphosphate (GGPP) to the C3 hydroxyl of sn-glycerol-1-phosphate (G1P). This reaction is the first ether-bond-formation step in the biosynthesis of archaeal membrane lipids. This is Geranylgeranylglyceryl phosphate synthase from Staphylothermus marinus (strain ATCC 43588 / DSM 3639 / JCM 9404 / F1).